Here is a 70-residue protein sequence, read N- to C-terminus: Small ribosomal subunit protein bS21 (70 aa).

The protein belongs to the bacterial ribosomal protein bS21 family.

This is Small ribosomal subunit protein bS21 from Cupriavidus pinatubonensis (strain JMP 134 / LMG 1197) (Cupriavidus necator (strain JMP 134)).